The sequence spans 1020 residues: RNA-binding protein 44 (1020 aa).

Disordered regions lie at residues M1–Q23 and D50–V70. The span at T58–V70 shows a compositional bias: basic and acidic residues. Phosphoserine occurs at positions 249, 371, 374, 516, 683, and 690. Positions F796–I870 constitute an RRM domain.

As to quaternary structure, homodimer. Interacts with TEX14.

It is found in the cytoplasm. Component of intercellular bridges during meiosis. Intercellular bridges are evolutionarily conserved structures that connect differentiating germ cells. Not required for fertility. This is RNA-binding protein 44 (Rbm44) from Rattus norvegicus (Rat).